Reading from the N-terminus, the 411-residue chain is Putative odorant receptor 59c (411 aa).

The Cytoplasmic portion of the chain corresponds to 1–46; that stretch reads MTKFFFKRLQTAPLDQEVSSLDASDYYYRIAFFLGWTPPKGALLRW. The helical transmembrane segment at 47–67 threads the bilayer; that stretch reads IYSLWTLTTMWLGIVYLPLGL. Over 68–86 the chain is Extracellular; the sequence is SLTYVKHFDRFTPTEFLTS. Residues 87-107 form a helical membrane-spanning segment; that stretch reads LQVDINCIGNVIKSCVTYSQM. At 108–139 the chain is on the cytoplasmic side; sequence WRFRRMNELISSLDKRCVTTTQRRIFHKMVAR. The helical transmembrane segment at 140–160 threads the bilayer; sequence VNLIVILFLSTYLGFCFLTLF. Over 161–185 the chain is Extracellular; the sequence is TSVFAGKAPWQLYNPLVDWRKGHWQ. The chain crosses the membrane as a helical span at residues 186–206; the sequence is LWIASILEYCVVSIGTMQELM. The Cytoplasmic segment spans residues 207-271; that stretch reads SDTYAIVFIS…QIIRPILSIT (65 aa). A helical transmembrane segment spans residues 272–292; it reads IFAQFMLVGIDLGLAAISILF. At 293-296 the chain is on the extracellular side; it reads FPNT. Residues 297–317 traverse the membrane as a helical segment; that stretch reads IWTIMANVSFIVAICTESFPC. At 318-369 the chain is on the cytoplasmic side; it reads CMLCEHLIEDSVHVSNALFHSNWITADRSYKSAVLYFLHRAQQPIQFTAGSI. Residues 370-390 traverse the membrane as a helical segment; that stretch reads FPISVQSNIAVAKFAFTIITI. The Extracellular segment spans residues 391–411; the sequence is VNQMNLGEKFFSDRSNGDINP.

Belongs to the insect chemoreceptor superfamily. Heteromeric odorant receptor channel (TC 1.A.69) family. Or2a subfamily. Interacts with Orco. Complexes exist early in the endomembrane system in olfactory sensory neurons (OSNs), coupling these complexes to the conserved ciliary trafficking pathway. Expressed in olfactory sensory neurons in the maxillary palp.

The protein resides in the cell membrane. Functionally, odorant receptor which mediates acceptance or avoidance behavior, depending on its substrates. The odorant receptor repertoire encodes a large collection of odor stimuli that vary widely in identity, intensity, and duration. May form a complex with Orco to form odorant-sensing units, providing sensitive and prolonged odorant signaling and calcium permeability. In Drosophila melanogaster (Fruit fly), this protein is Putative odorant receptor 59c (Or59c).